We begin with the raw amino-acid sequence, 620 residues long: uncharacterized protein (620 aa).

Helical transmembrane passes span 66–86 (LLNF…NQII), 238–258 (FFDA…NLLW), 546–566 (LGII…VWTI), and 584–604 (IIFI…ILVF).

The protein resides in the cell membrane. This is an uncharacterized protein from Mycoplasma genitalium (strain ATCC 33530 / DSM 19775 / NCTC 10195 / G37) (Mycoplasmoides genitalium).